The chain runs to 43 residues: Bacteriocin leucocin-C (43 aa).

The cysteines at positions 9 and 14 are disulfide-linked.

The protein localises to the secreted. In terms of biological role, inhibits a wide spectrum of lactic acid bacteria. In Leuconostoc mesenteroides, this protein is Bacteriocin leucocin-C.